The primary structure comprises 946 residues: Bifunctional glutamine synthetase adenylyltransferase/adenylyl-removing enzyme (946 aa).

Residues 1–440 are adenylyl removase; that stretch reads MKPLSSPLQQ…VFNELIGDDE (440 aa). Positions 449–946 are adenylyl transferase; sequence SEQWRELWQD…ASWQKWLVEE (498 aa).

This sequence belongs to the GlnE family. It depends on Mg(2+) as a cofactor.

The enzyme catalyses [glutamine synthetase]-O(4)-(5'-adenylyl)-L-tyrosine + phosphate = [glutamine synthetase]-L-tyrosine + ADP. It carries out the reaction [glutamine synthetase]-L-tyrosine + ATP = [glutamine synthetase]-O(4)-(5'-adenylyl)-L-tyrosine + diphosphate. Involved in the regulation of glutamine synthetase GlnA, a key enzyme in the process to assimilate ammonia. When cellular nitrogen levels are high, the C-terminal adenylyl transferase (AT) inactivates GlnA by covalent transfer of an adenylyl group from ATP to specific tyrosine residue of GlnA, thus reducing its activity. Conversely, when nitrogen levels are low, the N-terminal adenylyl removase (AR) activates GlnA by removing the adenylyl group by phosphorolysis, increasing its activity. The regulatory region of GlnE binds the signal transduction protein PII (GlnB) which indicates the nitrogen status of the cell. This chain is Bifunctional glutamine synthetase adenylyltransferase/adenylyl-removing enzyme, found in Escherichia coli O8 (strain IAI1).